Consider the following 171-residue polypeptide: Ribosome-binding factor A (171 aa).

Positions 126-138 (VREGAKHAGDADP) are enriched in basic and acidic residues. A disordered region spans residues 126–171 (VREGAKHAGDADPYRVSGVEEEAGGSGEVQAEFDAEDTGDRNRQDD).

This sequence belongs to the RbfA family. In terms of assembly, monomer. Binds 30S ribosomal subunits, but not 50S ribosomal subunits or 70S ribosomes.

The protein localises to the cytoplasm. Functionally, one of several proteins that assist in the late maturation steps of the functional core of the 30S ribosomal subunit. Associates with free 30S ribosomal subunits (but not with 30S subunits that are part of 70S ribosomes or polysomes). Required for efficient processing of 16S rRNA. May interact with the 5'-terminal helix region of 16S rRNA. This Mycobacterium sp. (strain JLS) protein is Ribosome-binding factor A.